Here is a 200-residue protein sequence, read N- to C-terminus: Small ribosomal subunit protein uS4 (200 aa).

The S4 RNA-binding domain maps to 94-157 (SRLDNLVFRA…QTSPQVKDAV (64 aa)).

It belongs to the universal ribosomal protein uS4 family. Part of the 30S ribosomal subunit. Contacts protein S5. The interaction surface between S4 and S5 is involved in control of translational fidelity.

Functionally, one of the primary rRNA binding proteins, it binds directly to 16S rRNA where it nucleates assembly of the body of the 30S subunit. With S5 and S12 plays an important role in translational accuracy. This chain is Small ribosomal subunit protein uS4, found in Metamycoplasma arthritidis (strain 158L3-1) (Mycoplasma arthritidis).